A 127-amino-acid chain; its full sequence is Fluoride-specific ion channel FluC (127 aa).

4 helical membrane passes run 4–24 (LDYL…YLVS), 39–59 (GTII…FAAI), 68–88 (AILF…TFTY), and 102–122 (VAYA…GMIL). Glycine 78 and threonine 81 together coordinate Na(+).

Belongs to the fluoride channel Fluc/FEX (TC 1.A.43) family.

Its subcellular location is the cell inner membrane. The catalysed reaction is fluoride(in) = fluoride(out). With respect to regulation, na(+) is not transported, but it plays an essential structural role and its presence is essential for fluoride channel function. Its function is as follows. Fluoride-specific ion channel. Important for reducing fluoride concentration in the cell, thus reducing its toxicity. In Thermotoga maritima (strain ATCC 43589 / DSM 3109 / JCM 10099 / NBRC 100826 / MSB8), this protein is Fluoride-specific ion channel FluC.